Reading from the N-terminus, the 558-residue chain is uncharacterized protein (558 aa).

Low complexity predominate over residues 338 to 354 (STSTSTSTSTSSSNDLN). Positions 338 to 380 (STSTSTSTSTSSSNDLNLDSDSDDSDSDDSDSDSDSDSDSEID) are disordered. The span at 355-380 (LDSDSDDSDSDDSDSDSDSDSDSEID) shows a compositional bias: acidic residues.

The protein localises to the plastid. This is an uncharacterized protein from Euglena longa (Euglenophycean alga).